We begin with the raw amino-acid sequence, 456 residues long: Glycosyl hydrolase family 109 protein 2 (456 aa).

Residues 1–33 (MSGFDRRSFLKASMVTAAATALAACASSERATG) constitute a signal peptide (tat-type signal). NAD(+)-binding positions include 63–64 (ER), Asp-85, 134–137 (WAWH), 154–155 (EV), and Asn-183. Residues Tyr-212, Arg-231, 243 to 246 (YPTH), and Tyr-325 each bind substrate. Residue Tyr-243 coordinates NAD(+).

It belongs to the Gfo/Idh/MocA family. Glycosyl hydrolase 109 subfamily. Requires NAD(+) as cofactor. In terms of processing, predicted to be exported by the Tat system. The position of the signal peptide cleavage has not been experimentally proven.

Glycosidase. In Shewanella sp. (strain MR-4), this protein is Glycosyl hydrolase family 109 protein 2.